Reading from the N-terminus, the 412-residue chain is Diphosphomevalonate decarboxylase MVD1, peroxisomal (412 aa).

Residue 23–26 (YWGK) participates in (R)-5-diphosphomevalonate binding. The Peroxisomal targeting signal PTS2 motif lies at 40–48 (SVTLDPDHL). (R)-5-diphosphomevalonate is bound by residues arginine 78, 161 to 166 (SGSACR), and threonine 217.

It belongs to the diphosphomevalonate decarboxylase family. In terms of assembly, homodimer.

It is found in the peroxisome. The enzyme catalyses (R)-5-diphosphomevalonate + ATP = isopentenyl diphosphate + ADP + phosphate + CO2. Its pathway is isoprenoid biosynthesis; isopentenyl diphosphate biosynthesis via mevalonate pathway; isopentenyl diphosphate from (R)-mevalonate: step 3/3. Functionally, performs the first committed step in the biosynthesis of isoprene-containing compounds such as sterols and terpenoids. Is specific for (R)-5-diphosphomevalonate (MVAPP). The catalytic efficiency with (R)-5-phosphomevalonate (MVAP) as substrate is 10000-fold lower than for MVAPP. Can complement a yeast mutant defective in MVD activity. In Arabidopsis thaliana (Mouse-ear cress), this protein is Diphosphomevalonate decarboxylase MVD1, peroxisomal.